The chain runs to 180 residues: Large ribosomal subunit protein uL6 (180 aa).

This sequence belongs to the universal ribosomal protein uL6 family. As to quaternary structure, part of the 50S ribosomal subunit.

In terms of biological role, this protein binds to the 23S rRNA, and is important in its secondary structure. It is located near the subunit interface in the base of the L7/L12 stalk, and near the tRNA binding site of the peptidyltransferase center. The polypeptide is Large ribosomal subunit protein uL6 (Clostridium botulinum (strain ATCC 19397 / Type A)).